A 285-amino-acid polypeptide reads, in one-letter code: Hydrolase in pqqF 5'region (285 aa).

One can recognise a CN hydrolase domain in the interval 22-258; sequence MRVALYQCPP…EALIIGTLDR (237 aa). Glutamate 60 functions as the Proton acceptor in the catalytic mechanism. Lysine 131 functions as the Proton donor in the catalytic mechanism. Cysteine 165 (nucleophile) is an active-site residue.

This sequence belongs to the carbon-nitrogen hydrolase superfamily. NIT1/NIT2 family.

The protein is Hydrolase in pqqF 5'region of Pseudomonas protegens (strain DSM 19095 / LMG 27888 / CFBP 6595 / CHA0).